A 401-amino-acid polypeptide reads, in one-letter code: MKITQLPQEFIDAQPILTKLEDAGFEAYFVGGSVRDTMLGKTIHDVDIASSAFPEEVKSLFHNTVDTGIQHGTVMVLDHGTGYEITTFRVESTYTDFRRPDHVTFVRSLEEDLKRRDFTINALAMRHDGEVLDLFDGLEDMKKGVIRAVGDAEKRFTEDALRMMRALRFSAQLGFNIEADTQKALVDLAPNLAKIAVERVRVEFEKLLLGSQASQSLELALRDQVMNYLPGPHIEDWSSIIDDLNKDQATNYTVAWAHILSRTQFDDKKRRQFMYDWKMSRNVMKTVNAIVPIVHNPKKSTVFDIYQVLAYQEELLEVLSLTGSQPETIQRISHIIEMLPITKAADLNISGGELIRSGILTPGPLLGRVLKKIEYAVVVGDILNDHDALEKFAKEYVNDQN.

ATP contacts are provided by Gly32 and Arg35. Gly32 and Arg35 together coordinate CTP. The Mg(2+) site is built by Asp45 and Asp47. 5 residues coordinate ATP: Arg116, Asp159, Arg162, Arg165, and Arg168. The CTP site is built by Arg116, Asp159, Arg162, Arg165, and Arg168.

Belongs to the tRNA nucleotidyltransferase/poly(A) polymerase family. Bacterial CCA-adding enzyme type 3 subfamily. As to quaternary structure, homodimer. It depends on Mg(2+) as a cofactor.

The catalysed reaction is a tRNA precursor + 2 CTP + ATP = a tRNA with a 3' CCA end + 3 diphosphate. It carries out the reaction a tRNA with a 3' CCA end + 2 CTP + ATP = a tRNA with a 3' CCACCA end + 3 diphosphate. Catalyzes the addition and repair of the essential 3'-terminal CCA sequence in tRNAs without using a nucleic acid template. Adds these three nucleotides in the order of C, C, and A to the tRNA nucleotide-73, using CTP and ATP as substrates and producing inorganic pyrophosphate. tRNA 3'-terminal CCA addition is required both for tRNA processing and repair. Also involved in tRNA surveillance by mediating tandem CCA addition to generate a CCACCA at the 3' terminus of unstable tRNAs. While stable tRNAs receive only 3'-terminal CCA, unstable tRNAs are marked with CCACCA and rapidly degraded. The polypeptide is CCA-adding enzyme (Leuconostoc mesenteroides subsp. mesenteroides (strain ATCC 8293 / DSM 20343 / BCRC 11652 / CCM 1803 / JCM 6124 / NCDO 523 / NBRC 100496 / NCIMB 8023 / NCTC 12954 / NRRL B-1118 / 37Y)).